The chain runs to 761 residues: Cyclin-F (761 aa).

Positions 19 to 27 (RRRIKRRPR) match the Nuclear localization signal 1 motif. One can recognise an F-box domain in the interval 28–75 (VLTLLSLPEDVLLYVLECLPAVDILSMREVHPHLRSLVDSHSSVWARA). The 112-residue stretch at 300 to 411 (NKSSIFTTQK…EIISALEGKI (112 aa)) folds into the Cyclin N-terminal domain. 2 short sequence motifs (d box) span residues 316-319 (RYIL) and 355-358 (RAKL). 2 disordered regions span residues 575–594 (NKTKRRREESIQEDRGSFVT) and 677–761 (AENG…SDEL). Residues 580-590 (RREESIQEDRG) show a composition bias toward basic and acidic residues. The tract at residues 589-745 (RGSFVTTPTA…LLKASRRQVK (157 aa)) is PEST. A compositionally biased stretch (low complexity) spans 691–718 (SSGYSSVSSGGSPTSSSSPGLPFTPTPG). The span at 739 to 749 (ASRRQVKRKNQ) shows a compositional bias: basic residues.

The protein belongs to the cyclin family. Cyclin AB subfamily. In terms of assembly, component of the SCF(CCNF) complex.

The protein localises to the nucleus. It localises to the cytoplasm. The protein resides in the perinuclear region. Its subcellular location is the cytoskeleton. It is found in the microtubule organizing center. The protein localises to the centrosome. It localises to the centriole. Functionally, substrate recognition component of the SCF(CCNF) E3 ubiquitin-protein ligase complex which mediates the ubiquitination and subsequent proteasomal degradation of target proteins. The SCF(CCNF) E3 ubiquitin-protein ligase complex is an integral component of the ubiquitin proteasome system (UPS) and links proteasome degradation to the cell cycle. Mediates the substrate recognition and the proteasomal degradation of various target proteins during G2 phase involved in the regulation of cell cycle progression and in the maintenance of genome stability. The sequence is that of Cyclin-F (ccnf) from Xenopus laevis (African clawed frog).